Reading from the N-terminus, the 166-residue chain is Small ribosomal subunit protein uS4 (166 aa).

The region spanning 103–165 is the S4 RNA-binding domain; it reads RRLQTVVYKK…PTSPYFKKAQ (63 aa).

This sequence belongs to the universal ribosomal protein uS4 family. As to quaternary structure, part of the 30S ribosomal subunit. Contacts protein S5. The interaction surface between S4 and S5 is involved in control of translational fidelity.

Its function is as follows. One of the primary rRNA binding proteins, it binds directly to 16S rRNA where it nucleates assembly of the body of the 30S subunit. In terms of biological role, with S5 and S12 plays an important role in translational accuracy. This is Small ribosomal subunit protein uS4 from Ignicoccus hospitalis (strain KIN4/I / DSM 18386 / JCM 14125).